Here is a 341-residue protein sequence, read N- to C-terminus: HMG box-containing protein C10F6.08c (341 aa).

Basic and acidic residues predominate over residues 68–77 (SEAKSREFGQ). Disordered regions lie at residues 68–195 (SEAK…SNAK) and 236–341 (LTEE…SSNA). Composition is skewed to polar residues over residues 116 to 157 (DTNV…QVVQ) and 165 to 177 (NTDP…ITNL). Residues 178 to 195 (KTESSKSSGAKKATSNAK) are compositionally biased toward low complexity. The segment at residues 195–263 (KITDTMLFNH…KAREARRRRS (69 aa)) is a DNA-binding region (HMG box). Basic and acidic residues-rich tracts occupy residues 238 to 256 (EEEK…EKAR) and 269 to 304 (KLEK…GQKE). Residues threonine 314 and threonine 315 each carry the phosphothreonine modification. Serine 316 bears the Phosphoserine mark.

It localises to the nucleus. In Schizosaccharomyces pombe (strain 972 / ATCC 24843) (Fission yeast), this protein is HMG box-containing protein C10F6.08c.